The sequence spans 373 residues: Protein translocase subunit SecF (373 aa).

Transmembrane regions (helical) follow at residues 26-46 (IWYGISILITITAIVGLAVRG), 142-162 (WQGLGIFMVLVVIYLAIAFEW), 166-186 (LAAFVALIHDITITVGIYALV), 193-213 (GTVIGLLTILGYSLYDTVVVF), 251-271 (VVALLPVAGLLFIGGGVLGAG), and 280-300 (LFVGLAAGAYSSIFIATPLVA). Low complexity predominate over residues 322–332 (QGAAKGESAES). The segment at 322 to 373 (QGAAKGESAESAADEGAYDADEPDDAAPAVVGPRNQPASRGRGRGRPSGKRR) is disordered. Positions 333 to 346 (AADEGAYDADEPDD) are enriched in acidic residues. The segment covering 362 to 373 (GRGRGRPSGKRR) has biased composition (basic residues).

The protein belongs to the SecD/SecF family. SecF subfamily. In terms of assembly, forms a complex with SecD. Part of the essential Sec protein translocation apparatus which comprises SecA, SecYEG and auxiliary proteins SecDF. Other proteins may also be involved.

Its subcellular location is the cell membrane. Functionally, part of the Sec protein translocase complex. Interacts with the SecYEG preprotein conducting channel. SecDF uses the proton motive force (PMF) to complete protein translocation after the ATP-dependent function of SecA. This chain is Protein translocase subunit SecF, found in Streptomyces coelicolor (strain ATCC BAA-471 / A3(2) / M145).